The primary structure comprises 580 residues: E3 ubiquitin-protein ligase TRIM45 (580 aa).

The segment at 29 to 98 adopts an RING-type zinc-finger fold; it reads CPTCLRLFKV…QIGILCPVCD (70 aa). 2 B box-type zinc fingers span residues 130–176 and 186–227; these read GQGL…MVDL and GKPI…YDFT. Residues Cys135, Cys138, Cys158, His162, Cys191, His194, Cys214, and His219 each contribute to the Zn(2+) site. Positions 249–329 form a coiled coil; sequence VEALEDALAQ…LLADMRTGVE (81 aa). Residues 394–497 form a Filamin repeat; it reads TQEVDPAQCV…VQGSPFNVTV (104 aa).

It belongs to the TRIM/RBCC family.

Its subcellular location is the cytoplasm. The protein localises to the nucleus. The catalysed reaction is S-ubiquitinyl-[E2 ubiquitin-conjugating enzyme]-L-cysteine + [acceptor protein]-L-lysine = [E2 ubiquitin-conjugating enzyme]-L-cysteine + N(6)-ubiquitinyl-[acceptor protein]-L-lysine.. E3 ubiquitin-protein ligase that plays a role in the regulation of inflammatory response. Mechanistically, mediates the 'Lys-48'-linked polyubiquitination of TAB2, a regulatory protein of the kinase TAK1, leading to its degradation via the proteasomal pathway and inhibition of the TLR-mediated inflammatory immune response. May act as a transcriptional repressor in mitogen-activated protein kinase signaling pathway. The sequence is that of E3 ubiquitin-protein ligase TRIM45 (Trim45) from Mus musculus (Mouse).